The primary structure comprises 1014 residues: 2-oxoglutarate dehydrogenase, mitochondrial (1014 aa).

Residues 1–30 (MLRFVSSQTCRYSSRGLLKTSLLKNASTVK) constitute a mitochondrion transit peptide. The thiamine diphosphate site is built by Arg-306, Asp-406, Asn-439, and Ile-441. The Mg(2+) site is built by Asp-406, Asn-439, and Ile-441.

It belongs to the alpha-ketoglutarate dehydrogenase family. In terms of assembly, component of the 2-oxoglutarate dehydrogenase complex (OGDC), also called alpha-ketoglutarate dehydrogenase (KGDH) complex. The copmplex is composed of the catalytic subunits OGDH (2-oxoglutarate dehydrogenase KGD1; also called E1 subunit), DLST (dihydrolipoamide succinyltransferase KGD2; also called E2 subunit) and DLD (dihydrolipoamide dehydrogenase LPD1; also called E3 subunit), and the assembly factor KGD4. The cofactor is thiamine diphosphate. Mg(2+) is required as a cofactor.

It localises to the mitochondrion. The protein resides in the mitochondrion matrix. The protein localises to the mitochondrion nucleoid. The catalysed reaction is N(6)-[(R)-lipoyl]-L-lysyl-[protein] + 2-oxoglutarate + H(+) = N(6)-[(R)-S(8)-succinyldihydrolipoyl]-L-lysyl-[protein] + CO2. Catabolite repressed. Functionally, the 2-oxoglutarate dehydrogenase complex catalyzes the overall conversion of 2-oxoglutarate to succinyl-CoA and CO(2). It contains multiple copies of three enzymatic components: 2-oxoglutarate dehydrogenase (E1), dihydrolipoamide succinyltransferase (E2) and lipoamide dehydrogenase (E3). In Saccharomyces cerevisiae (strain ATCC 204508 / S288c) (Baker's yeast), this protein is 2-oxoglutarate dehydrogenase, mitochondrial (KGD1).